The chain runs to 210 residues: Uracil phosphoribosyltransferase (210 aa).

5-phospho-alpha-D-ribose 1-diphosphate-binding positions include Arg-78, Arg-103, and 130-138 (DPMLATGGS). Uracil contacts are provided by residues Ile-193 and 198–200 (GDA). Residue Asp-199 coordinates 5-phospho-alpha-D-ribose 1-diphosphate.

Belongs to the UPRTase family. Mg(2+) serves as cofactor.

The catalysed reaction is UMP + diphosphate = 5-phospho-alpha-D-ribose 1-diphosphate + uracil. It participates in pyrimidine metabolism; UMP biosynthesis via salvage pathway; UMP from uracil: step 1/1. Allosterically activated by GTP. In terms of biological role, catalyzes the conversion of uracil and 5-phospho-alpha-D-ribose 1-diphosphate (PRPP) to UMP and diphosphate. The polypeptide is Uracil phosphoribosyltransferase (Chromobacterium violaceum (strain ATCC 12472 / DSM 30191 / JCM 1249 / CCUG 213 / NBRC 12614 / NCIMB 9131 / NCTC 9757 / MK)).